The sequence spans 363 residues: dTDP-3-amino-3,6-dideoxy-alpha-D-galactopyranose transaminase (363 aa).

Lys-185 is modified (N6-(pyridoxal phosphate)lysine).

It belongs to the DegT/DnrJ/EryC1 family. It depends on pyridoxal 5'-phosphate as a cofactor.

The catalysed reaction is dTDP-3-amino-3,6-dideoxy-alpha-D-galactopyranose + 2-oxoglutarate = dTDP-3-dehydro-6-deoxy-alpha-D-galactose + L-glutamate. In terms of biological role, specifically aminates dTDP-6-deoxy-D-xylohex-3-ulose to form dTDP-D-Fucp3N in the biosynthesis of dTDP-3-acetamido-3,6-dideoxy-alpha-D-galactose, a glycan chain of the S-layer. This Aneurinibacillus thermoaerophilus protein is dTDP-3-amino-3,6-dideoxy-alpha-D-galactopyranose transaminase (fdtB).